We begin with the raw amino-acid sequence, 301 residues long: Protein RESTRICTED TEV MOVEMENT 3 (301 aa).

The region spanning 6–134 (DKKITWTIKN…NGELKIVVEI (129 aa)) is the MATH domain. Positions 235 to 289 (KLDWLEKKLYEVSEKKENEEASETGLQEMEEELKDMKQKCLEMEALVEKEKAKVS) form a coiled coil.

In terms of assembly, self-interacts. Interacts with RTM1.

Required for the restriction of long-distance movement of the pathogenic tobacco etch virus (TEV) without causing a hypersensitive response or inducing systemic acquired resistance. In Arabidopsis thaliana (Mouse-ear cress), this protein is Protein RESTRICTED TEV MOVEMENT 3 (RTM3).